The primary structure comprises 431 residues: Glucose-1-phosphate adenylyltransferase (431 aa).

Beta-D-fructose 1,6-bisphosphate is bound at residue Lys-39. 3 residues coordinate AMP: Arg-40, His-46, and Arg-52. Tyr-114 serves as a coordination point for alpha-D-glucose 1-phosphate. Arg-130 contacts AMP. Residues Gly-179, 194–195 (EK), and Ser-212 contribute to the alpha-D-glucose 1-phosphate site. Arg-386 is a binding site for AMP. Beta-D-fructose 1,6-bisphosphate contacts are provided by residues 419-423 (REMLR) and 429-431 (QER).

The protein belongs to the bacterial/plant glucose-1-phosphate adenylyltransferase family. Homotetramer.

It carries out the reaction alpha-D-glucose 1-phosphate + ATP + H(+) = ADP-alpha-D-glucose + diphosphate. Its pathway is glycan biosynthesis; glycogen biosynthesis. With respect to regulation, allosterically activated by fructose-1,6-bisphosphate (F16BP) and inhibited by AMP. Its function is as follows. Involved in the biosynthesis of ADP-glucose, a building block required for the elongation reactions to produce glycogen. Catalyzes the reaction between ATP and alpha-D-glucose 1-phosphate (G1P) to produce pyrophosphate and ADP-Glc. This is Glucose-1-phosphate adenylyltransferase from Enterobacter sp. (strain 638).